The chain runs to 305 residues: Small ribosomal subunit protein bS1B (305 aa).

S1 motif domains are found at residues 29 to 98 (GQTV…LSRR), 116 to 180 (GKTL…LTQR), and 194 to 262 (GNIY…LSTR).

Belongs to the bacterial ribosomal protein bS1 family.

Functionally, binds mRNA. This chain is Small ribosomal subunit protein bS1B (rps1b), found in Synechocystis sp. (strain ATCC 27184 / PCC 6803 / Kazusa).